We begin with the raw amino-acid sequence, 542 residues long: Protein lin-9 homolog (542 aa).

An N-acetylalanine modification is found at Ala2. Lys21 is covalently cross-linked (Glycyl lysine isopeptide (Lys-Gly) (interchain with G-Cter in SUMO2)). Ser65 and Ser95 each carry phosphoserine. A phosphothreonine mark is found at Thr96 and Thr304. 2 positions are modified to phosphoserine: Ser309 and Ser321.

The protein belongs to the lin-9 family. Component of the DREAM complex (also named LINC complex) at least composed of E2F4, E2F5, LIN9, LIN37, LIN52, LIN54, MYBL1, MYBL2, RBL1, RBL2, RBBP4, TFDP1 and TFDP2. The complex exists in quiescent cells where it represses cell cycle-dependent genes. It dissociates in S phase when LIN9, LIN37, LIN52 and LIN54 form a subcomplex that binds to MYBL2. Interacts with RB1.

Its subcellular location is the nucleus. The protein resides in the nucleoplasm. Its function is as follows. Acts as a tumor suppressor. Inhibits DNA synthesis. Its ability to inhibit oncogenic transformation is mediated through its association with RB1. Plays a role in the expression of genes required for the G1/S transition. In Mus musculus (Mouse), this protein is Protein lin-9 homolog (Lin9).